The primary structure comprises 429 residues: Glutamate-1-semialdehyde 2,1-aminomutase (429 aa).

At Lys-264 the chain carries N6-(pyridoxal phosphate)lysine.

Belongs to the class-III pyridoxal-phosphate-dependent aminotransferase family. HemL subfamily. In terms of assembly, homodimer. Pyridoxal 5'-phosphate is required as a cofactor.

The protein localises to the cytoplasm. The enzyme catalyses (S)-4-amino-5-oxopentanoate = 5-aminolevulinate. It participates in porphyrin-containing compound metabolism; protoporphyrin-IX biosynthesis; 5-aminolevulinate from L-glutamyl-tRNA(Glu): step 2/2. The chain is Glutamate-1-semialdehyde 2,1-aminomutase from Campylobacter curvus (strain 525.92).